Reading from the N-terminus, the 352-residue chain is Rhodopsin, deep-sea form (352 aa).

Over 1–36 (MNGTEGPNFYIPMSNITGVVRSPFEYPQYYLAEPWA) the chain is Extracellular. 2 N-linked (GlcNAc...) asparagine glycosylation sites follow: Asn2 and Asn15. The helical transmembrane segment at 37-61 (YTILAAYMFTLILLGFPVNFLTLYV) threads the bilayer. Topologically, residues 62 to 73 (TIEHKKLRTPLN) are cytoplasmic. A helical transmembrane segment spans residues 74 to 98 (YILLNLAVANLFMVFGGFTTTVYTS). The Extracellular segment spans residues 99–113 (MHGYFVFGETGCNLE). Cys110 and Cys187 are joined by a disulfide. A helical transmembrane segment spans residues 114 to 133 (GYFATLGGEISLWSLVVLAI). Residues 134-152 (ERWVVVCKPMSNFRFGENH) lie on the Cytoplasmic side of the membrane. A helical membrane pass occupies residues 153–176 (AIMGLAFTWIMANSCAMPPLFGWS). Topologically, residues 177 to 202 (RYIPEGMQCSCGVDYYTLKPEVNNES) are extracellular. A glycan (N-linked (GlcNAc...) asparagine) is linked at Asn200. A helical transmembrane segment spans residues 203-230 (FVIYMFIVHFSVPLTIISFCYGRLVCTV). Over 231-252 (KEAAAQQQESETTQRAEREVTR) the chain is Cytoplasmic. The chain crosses the membrane as a helical span at residues 253–276 (MVVIMVIAFLVCWVPYASVAWYIF). Over 277 to 284 (THQGSTFG) the chain is Extracellular. Residues 285–309 (PVFMTVPSFFAKSSAIYNPLIYICL) traverse the membrane as a helical segment. An N6-(retinylidene)lysine modification is found at Lys296. At 310 to 352 (NSQFRNCMITTLFCGKNPFQEEEGASTTASKTEASSVSSVSPA) the chain is on the cytoplasmic side. Cys323 carries S-palmitoyl cysteine lipidation. Residues 333 to 352 (GASTTASKTEASSVSSVSPA) are disordered. The segment covering 334–352 (ASTTASKTEASSVSSVSPA) has biased composition (low complexity).

This sequence belongs to the G-protein coupled receptor 1 family. Opsin subfamily. Phosphorylated on some or all of the serine and threonine residues present in the C-terminal region. As to expression, rod shaped photoreceptor cells which mediates vision in dim light.

Its subcellular location is the membrane. In terms of biological role, visual pigments such as rhodopsin and porphyropsin are light-absorbing molecules that mediate vision. Rhodopsin consists of an apoprotein, opsin, covalently linked to 11-cis-retinal. This receptor is coupled to the activation of phospholipase C. Porphyropsin consists of opsin covalently linked to 11-cis 3,4-didehydroretinal. The polypeptide is Rhodopsin, deep-sea form (Anguilla anguilla (European freshwater eel)).